The primary structure comprises 353 residues: MTAILERRESESLWGRFCNWITSTENRLYIGWFGVLMIPTLLTATSVFIIAFIAAPPVDIDGIREPVSGSLLYGNNIISGAIIPTSAAIGLHFYPIWEAASVDEWLYNGGPYELIVLHFLLGVACYMGREWELSFRLGMRPWIAVAYSAPVAAATAVFLIYPIGQGSFSDGMPLGISGTFNFMIVFQAEHNILMHPFHMLGVAGVFGSSLFSAMHGSLVTSSLIRETTENESANEGYRFGQEEETYNIVAAHGYFGRLIFQYASFNNSRSLHFFLAAWPVVGIWFTALGISTMAFNLNGFNFNQSVVDSQGRVINTWADIINRANLGMEVMHERNAHNFPLDLAAMEAPSVNG.

Thr-2 carries the post-translational modification N-acetylthreonine. Thr-2 is subject to Phosphothreonine. A run of 3 helical transmembrane segments spans residues Tyr-29–Ser-46, His-118–Leu-133, and Trp-142–Ala-156. His-118 contributes to the chlorophyll a binding site. Tyr-126 contributes to the pheophytin a binding site. Positions 170 and 189 each coordinate [CaMn4O5] cluster. A helical transmembrane segment spans residues Phe-197–Leu-218. His-198 is a binding site for chlorophyll a. A quinone is bound by residues His-215 and Ser-264–Phe-265. Position 215 (His-215) interacts with Fe cation. His-272 is a binding site for Fe cation. A helical transmembrane segment spans residues Phe-274–Leu-288. The [CaMn4O5] cluster site is built by His-332, Glu-333, Asp-342, and Ala-344. Residues Ala-345–Gly-353 constitute a propeptide that is removed on maturation.

Belongs to the reaction center PufL/M/PsbA/D family. PSII is composed of 1 copy each of membrane proteins PsbA, PsbB, PsbC, PsbD, PsbE, PsbF, PsbH, PsbI, PsbJ, PsbK, PsbL, PsbM, PsbT, PsbX, PsbY, PsbZ, Psb30/Ycf12, at least 3 peripheral proteins of the oxygen-evolving complex and a large number of cofactors. It forms dimeric complexes. Requires The D1/D2 heterodimer binds P680, chlorophylls that are the primary electron donor of PSII, and subsequent electron acceptors. It shares a non-heme iron and each subunit binds pheophytin, quinone, additional chlorophylls, carotenoids and lipids. D1 provides most of the ligands for the Mn4-Ca-O5 cluster of the oxygen-evolving complex (OEC). There is also a Cl(-1) ion associated with D1 and D2, which is required for oxygen evolution. The PSII complex binds additional chlorophylls, carotenoids and specific lipids. as cofactor. In terms of processing, tyr-161 forms a radical intermediate that is referred to as redox-active TyrZ, YZ or Y-Z. C-terminally processed by CTPA; processing is essential to allow assembly of the oxygen-evolving complex and thus photosynthetic growth.

The protein localises to the plastid. The protein resides in the chloroplast thylakoid membrane. It catalyses the reaction 2 a plastoquinone + 4 hnu + 2 H2O = 2 a plastoquinol + O2. Its function is as follows. Photosystem II (PSII) is a light-driven water:plastoquinone oxidoreductase that uses light energy to abstract electrons from H(2)O, generating O(2) and a proton gradient subsequently used for ATP formation. It consists of a core antenna complex that captures photons, and an electron transfer chain that converts photonic excitation into a charge separation. The D1/D2 (PsbA/PsbD) reaction center heterodimer binds P680, the primary electron donor of PSII as well as several subsequent electron acceptors. The sequence is that of Photosystem II protein D1 from Vigna unguiculata (Cowpea).